Reading from the N-terminus, the 338-residue chain is Ketol-acid reductoisomerase (NADP(+)) (338 aa).

Positions 1–181 (MKVSYDKDCD…GGGRTGIIET (181 aa)) constitute a KARI N-terminal Rossmann domain. Residues 24 to 27 (YGSQ), arginine 47, serine 50, serine 52, and 82 to 85 (DEFQ) contribute to the NADP(+) site. Histidine 107 is a catalytic residue. An NADP(+)-binding site is contributed by glycine 133. A KARI C-terminal knotted domain is found at 182–327 (TFKDETETDL…EKLRAMMPWI (146 aa)). Residues aspartate 190, glutamate 194, glutamate 226, and glutamate 230 each contribute to the Mg(2+) site. Substrate is bound at residue serine 251.

The protein belongs to the ketol-acid reductoisomerase family. Mg(2+) serves as cofactor.

The enzyme catalyses (2R)-2,3-dihydroxy-3-methylbutanoate + NADP(+) = (2S)-2-acetolactate + NADPH + H(+). It catalyses the reaction (2R,3R)-2,3-dihydroxy-3-methylpentanoate + NADP(+) = (S)-2-ethyl-2-hydroxy-3-oxobutanoate + NADPH + H(+). The protein operates within amino-acid biosynthesis; L-isoleucine biosynthesis; L-isoleucine from 2-oxobutanoate: step 2/4. It participates in amino-acid biosynthesis; L-valine biosynthesis; L-valine from pyruvate: step 2/4. Its function is as follows. Involved in the biosynthesis of branched-chain amino acids (BCAA). Catalyzes an alkyl-migration followed by a ketol-acid reduction of (S)-2-acetolactate (S2AL) to yield (R)-2,3-dihydroxy-isovalerate. In the isomerase reaction, S2AL is rearranged via a Mg-dependent methyl migration to produce 3-hydroxy-3-methyl-2-ketobutyrate (HMKB). In the reductase reaction, this 2-ketoacid undergoes a metal-dependent reduction by NADPH to yield (R)-2,3-dihydroxy-isovalerate. The polypeptide is Ketol-acid reductoisomerase (NADP(+)) (Stutzerimonas stutzeri (strain A1501) (Pseudomonas stutzeri)).